The chain runs to 106 residues: Thiosulfate sulfurtransferase GlpE (106 aa).

In terms of domain architecture, Rhodanese spans 17–105 (EQKQAHLVDI…WHRANLPIEA (89 aa)). Residue cysteine 65 is the Cysteine persulfide intermediate of the active site.

This sequence belongs to the GlpE family.

The protein resides in the cytoplasm. The catalysed reaction is thiosulfate + hydrogen cyanide = thiocyanate + sulfite + 2 H(+). It carries out the reaction thiosulfate + [thioredoxin]-dithiol = [thioredoxin]-disulfide + hydrogen sulfide + sulfite + 2 H(+). In terms of biological role, transferase that catalyzes the transfer of sulfur from thiosulfate to thiophilic acceptors such as cyanide or dithiols. May function in a CysM-independent thiosulfate assimilation pathway by catalyzing the conversion of thiosulfate to sulfite, which can then be used for L-cysteine biosynthesis. The chain is Thiosulfate sulfurtransferase GlpE from Vibrio cholerae serotype O1 (strain ATCC 39541 / Classical Ogawa 395 / O395).